The chain runs to 161 residues: Regulator of ribonuclease activity A (161 aa).

This sequence belongs to the RraA family. In terms of assembly, homotrimer. Binds to both RNA-binding sites in the C-terminal region of Rne and to RhlB.

It is found in the cytoplasm. Globally modulates RNA abundance by binding to RNase E (Rne) and regulating its endonucleolytic activity. Can modulate Rne action in a substrate-dependent manner by altering the composition of the degradosome. Modulates RNA-binding and helicase activities of the degradosome. The sequence is that of Regulator of ribonuclease activity A from Serratia proteamaculans (strain 568).